Reading from the N-terminus, the 738-residue chain is NAD(P)H-quinone oxidoreductase subunit 5, chloroplastic (738 aa).

17 consecutive transmembrane segments (helical) span residues Trp9 to Phe29, Ile39 to Ser59, Ile89 to Ile109, Phe125 to Ile145, Ile147 to Thr167, Gly185 to Phe205, Phe224 to Phe244, Thr258 to Ala278, Leu280 to Ile300, Leu327 to Ile347, Thr396 to Ser416, Trp425 to Tyr445, Met544 to Leu564, Phe600 to Phe620, Ile667 to Phe687, Gly694 to Gly714, and Ile718 to Asn738.

This sequence belongs to the complex I subunit 5 family. In terms of assembly, NDH is composed of at least 16 different subunits, 5 of which are encoded in the nucleus.

It localises to the plastid. The protein localises to the chloroplast thylakoid membrane. It catalyses the reaction a plastoquinone + NADH + (n+1) H(+)(in) = a plastoquinol + NAD(+) + n H(+)(out). The catalysed reaction is a plastoquinone + NADPH + (n+1) H(+)(in) = a plastoquinol + NADP(+) + n H(+)(out). Functionally, NDH shuttles electrons from NAD(P)H:plastoquinone, via FMN and iron-sulfur (Fe-S) centers, to quinones in the photosynthetic chain and possibly in a chloroplast respiratory chain. The immediate electron acceptor for the enzyme in this species is believed to be plastoquinone. Couples the redox reaction to proton translocation, and thus conserves the redox energy in a proton gradient. The polypeptide is NAD(P)H-quinone oxidoreductase subunit 5, chloroplastic (ndhF) (Ranunculus macranthus (Large buttercup)).